Consider the following 478-residue polypeptide: Leukotoxin secretion protein D (478 aa).

Over 1 to 59 (MKIWLSGIYEFFLRYKNTWAEVWKIRKELDHPNRKKDESEFLPAHLDLIETPVSKKPRL) the chain is Cytoplasmic. Residues 60–80 (IAYLIMLFLVVAIVLASVSKV) traverse the membrane as a helical segment. Residues 81 to 478 (EIVATAPGKL…ESVTESLRER (398 aa)) are Periplasmic-facing.

Belongs to the membrane fusion protein (MFP) (TC 8.A.1) family.

The protein localises to the cell inner membrane. Functionally, involved in the transport of the Leukotoxin. This Mannheimia haemolytica (Pasteurella haemolytica) protein is Leukotoxin secretion protein D (lktD).